A 283-amino-acid polypeptide reads, in one-letter code: Serine protease 57 (283 aa).

Residues 1–31 (MGLGLRGWGRPLLTVATALMLPVKPPAGSWG) form the signal peptide. The Peptidase S1 domain occupies 34–263 (IIGGHEVTPH…FVAWIWDVVR (230 aa)). A disulfide bridge links Cys59 with Cys75. Catalysis depends on charge relay system residues His74 and Asp122. N-linked (GlcNAc...) asparagine glycosylation is found at Asn129 and Asn189. Cystine bridges form between Cys157–Cys224, Cys188–Cys202, and Cys214–Cys239. The active-site Charge relay system is the Ser218.

Belongs to the peptidase S1 family. Post-translationally, after cleavage of the signal peptide, the N-terminus is probably further processed by CTSC. Processing by CTSC is probably required for accumulation in cytoplasmic granules; in the absence of CTSC the protein does not accumulate. In terms of processing, N-glycosylated. In terms of tissue distribution, detected in peripheral blood neutrophil granulocytes, but not in other types of leukocytes. Detected in neutrophils and neutrophil precursors in bone marrow (at protein level). Detected in myeloblasts and promyelocytes in bone marrow.

The protein resides in the cytoplasmic granule lumen. The protein localises to the secreted. With respect to regulation, inhibited by SERPINA1, SERPINC1 and SERPING1. Its function is as follows. Serine protease that cleaves preferentially after Arg residues. Can also cleave after citrulline (deimidated arginine) and methylarginine residues. This is Serine protease 57 (PRSS57) from Homo sapiens (Human).